Consider the following 134-residue polypeptide: T-cell receptor beta chain V region CTL-F3 (134 aa).

Residues 1-19 (MAPRLLFCLVLCFLRAEPT) form the signal peptide. The segment at 20-115 (NAGVIQTPRH…SAVYLCASSL (96 aa)) is v segment. Cysteine 42 and cysteine 111 are disulfide-bonded. An N-linked (GlcNAc...) asparagine glycan is attached at asparagine 90. Residues 116–119 (STGV) are d segment. The segment at 120–134 (SYEQYFGPGTRLTVL) is j segment.

This is T-cell receptor beta chain V region CTL-F3 from Mus musculus (Mouse).